The primary structure comprises 336 residues: DNA-directed RNA polymerase subunit alpha (336 aa).

An alpha N-terminal domain (alpha-NTD) region spans residues 1 to 232 (MIQKNWQELI…DQLGVFVNFD (232 aa)). The interval 248–336 (FNPALLKKVD…DLAKRYEDQY (89 aa)) is alpha C-terminal domain (alpha-CTD).

It belongs to the RNA polymerase alpha chain family. In terms of assembly, homodimer. The RNAP catalytic core consists of 2 alpha, 1 beta, 1 beta' and 1 omega subunit. When a sigma factor is associated with the core the holoenzyme is formed, which can initiate transcription.

It catalyses the reaction RNA(n) + a ribonucleoside 5'-triphosphate = RNA(n+1) + diphosphate. Functionally, DNA-dependent RNA polymerase catalyzes the transcription of DNA into RNA using the four ribonucleoside triphosphates as substrates. In Rhizobium radiobacter (Agrobacterium tumefaciens), this protein is DNA-directed RNA polymerase subunit alpha.